Consider the following 194-residue polypeptide: Probable GTP-binding protein EngB (194 aa).

The 175-residue stretch at 19-193 (DCIQICFWGR…VLFIEENIFK (175 aa)) folds into the EngB-type G domain. GTP is bound by residues 27–34 (GRSNVGKS), 53–57 (GRTQF), 70–73 (DLPG), 137–140 (TKID), and 172–174 (VSS). Serine 34 and threonine 55 together coordinate Mg(2+).

This sequence belongs to the TRAFAC class TrmE-Era-EngA-EngB-Septin-like GTPase superfamily. EngB GTPase family. Requires Mg(2+) as cofactor.

Functionally, necessary for normal cell division and for the maintenance of normal septation. This Mycoplasmopsis agalactiae (strain NCTC 10123 / CIP 59.7 / PG2) (Mycoplasma agalactiae) protein is Probable GTP-binding protein EngB.